The sequence spans 435 residues: Histidinol dehydrogenase (435 aa).

Positions 131, 189, and 212 each coordinate NAD(+). 3 residues coordinate substrate: Ser-238, Gln-260, and His-263. Zn(2+)-binding residues include Gln-260 and His-263. Catalysis depends on proton acceptor residues Glu-327 and His-328. Substrate-binding residues include His-328, Asp-361, Glu-415, and His-420. Asp-361 contacts Zn(2+). His-420 contacts Zn(2+).

Belongs to the histidinol dehydrogenase family. As to quaternary structure, homodimer. The cofactor is Zn(2+).

It catalyses the reaction L-histidinol + 2 NAD(+) + H2O = L-histidine + 2 NADH + 3 H(+). The protein operates within amino-acid biosynthesis; L-histidine biosynthesis; L-histidine from 5-phospho-alpha-D-ribose 1-diphosphate: step 9/9. Its function is as follows. Catalyzes the sequential NAD-dependent oxidations of L-histidinol to L-histidinaldehyde and then to L-histidine. In Buchnera aphidicola subsp. Acyrthosiphon pisum (strain APS) (Acyrthosiphon pisum symbiotic bacterium), this protein is Histidinol dehydrogenase (hisD).